The following is a 270-amino-acid chain: Imidazole glycerol phosphate synthase subunit HisF (270 aa).

Residues Asp11 and Asp130 contribute to the active site.

Belongs to the HisA/HisF family. As to quaternary structure, heterodimer of HisH and HisF.

It localises to the cytoplasm. It catalyses the reaction 5-[(5-phospho-1-deoxy-D-ribulos-1-ylimino)methylamino]-1-(5-phospho-beta-D-ribosyl)imidazole-4-carboxamide + L-glutamine = D-erythro-1-(imidazol-4-yl)glycerol 3-phosphate + 5-amino-1-(5-phospho-beta-D-ribosyl)imidazole-4-carboxamide + L-glutamate + H(+). It participates in amino-acid biosynthesis; L-histidine biosynthesis; L-histidine from 5-phospho-alpha-D-ribose 1-diphosphate: step 5/9. In terms of biological role, IGPS catalyzes the conversion of PRFAR and glutamine to IGP, AICAR and glutamate. The HisF subunit catalyzes the cyclization activity that produces IGP and AICAR from PRFAR using the ammonia provided by the HisH subunit. This Sorangium cellulosum (strain So ce56) (Polyangium cellulosum (strain So ce56)) protein is Imidazole glycerol phosphate synthase subunit HisF.